A 372-amino-acid polypeptide reads, in one-letter code: Protein phosphatase Mn(2+)-dependent 1K (372 aa).

A mitochondrion-targeting transit peptide spans 1 to 29 (MSTAALLTLVRSGGNQVRRRVLLRARGLQ). The interval 46–61 (KWSRFDPDGSGRPATW) is critical for association with the BCKDH complex. One can recognise a PPM-type phosphatase domain in the interval 94 to 346 (NVGSASQIGK…DNTTAVVVPF (253 aa)). Residues D127 and G128 each contribute to the Mn(2+) site. S248 is modified (phosphoserine). Mn(2+) contacts are provided by D298 and D337.

Belongs to the PP2C family. In terms of assembly, monomer. Interacts with E1 and E2 components of the branched-chain alpha-ketoacid dehydrogenase (BCKDH) complex; this interaction requires colocalization in mitochondria. Interacts with BCKDHA but not with BCKDHB of the E1 component. Interacts with the 24-meric E2 core composed of DBT monomers with a 24:1 stoichiometry; the N-terminal region (residues 49-61) of PPM1K and C-terminal linker of the lipoyl domain of DBT (residues 145-160) are critical for this interaction, whereas the lipoyl prosthetic group is dispensable. Competes with BCKDK for binding to the E2 core; this interaction is modulated by branched-chain alpha-keto acids. At steady state, BCKDH holoenzyme preferentially binds BCKDK and BCKDHA is phosphorylated. In response to high levels of branched-chain alpha-keto acids, the inhibitory BCKDK is replaced by activating PPM1K leading to BCKDHA dephosphorylation and BCAA degradation. Mn(2+) serves as cofactor.

The protein resides in the mitochondrion matrix. The enzyme catalyses O-phospho-L-seryl-[3-methyl-2-oxobutanoate dehydrogenase] + H2O = L-seryl-[3-methyl-2-oxobutanoate dehydrogenase] + phosphate. It carries out the reaction O-phospho-L-seryl-[protein] + H2O = L-seryl-[protein] + phosphate. Its pathway is protein modification. Its function is as follows. Serine/threonine-protein phosphatase component of macronutrients metabolism. Forms a functional kinase and phosphatase pair with BCKDK, serving as a metabolic regulatory node that coordinates branched-chain amino acids (BCAAs) with glucose and lipid metabolism via two distinct phosphoprotein targets: mitochondrial BCKDHA subunit of the branched-chain alpha-ketoacid dehydrogenase (BCKDH) complex and cytosolic ACLY, a lipogenic enzyme of Krebs cycle. At high levels of branched-chain ketoacids, dephosphorylates and activates mitochondrial BCKDH complex, a multisubunit complex consisting of three multimeric components each involved in different steps of BCAA catabolism: E1 composed of BCKDHA and BCKDHB, E2 core composed of DBT monomers, and E3 composed of DLD monomers. Tightly associates with the E2 component of BCKDH complex and dephosphorylates BCKDHA on Ser-347. Regulates the reversible phosphorylation of ACLY in response to changes in cellular carbohydrate abundance such as occurs during fasting to feeding metabolic transition. At fasting state, appears to dephosphorylate ACLY on Ser-455 and inactivate it. Refeeding stimulates MLXIPL/ChREBP transcription factor, leading to increased BCKDK to PPM1K expression ratio, phosphorylation and activation of ACLY that ultimately results in the generation of malonyl-CoA and oxaloacetate immediate substrates of de novo lipogenesis and gluconeogenesis, respectively. Recognizes phosphosites having SxS or RxxS motifs and strictly depends on Mn(2+) ions for the phosphatase activity. Regulates Ca(2+)-induced opening of mitochondrial transition pore and apoptotic cell death. The polypeptide is Protein phosphatase Mn(2+)-dependent 1K (PPM1K) (Bos taurus (Bovine)).